A 2216-amino-acid chain; its full sequence is Protein Ycf2 (2216 aa).

1567–1574 contributes to the ATP binding site; it reads GSIGTGRS.

This sequence belongs to the Ycf2 family.

It localises to the plastid stroma. Functionally, probable ATPase of unknown function. Its presence in a non-photosynthetic plant (Epifagus virginiana) and experiments in tobacco indicate that it has an essential function which is probably not related to photosynthesis. The polypeptide is Protein Ycf2 (Epifagus virginiana (Beechdrops)).